We begin with the raw amino-acid sequence, 1026 residues long: Tyrosine-protein phosphatase 1 (1026 aa).

Positions 29–315 (IRCTVTFLDS…EQHTFFRLKT (287 aa)) constitute an FERM domain. 4 disordered regions span residues 376 to 396 (SIDS…LPSS), 430 to 456 (PLTT…SLRQ), 489 to 515 (GIHA…KSAN), and 584 to 616 (SFAS…DQVV). A compositionally biased stretch (polar residues) spans 446–456 (DSESSAPSLRQ). A compositionally biased stretch (low complexity) spans 600 to 609 (SPQSNKSSSP). The region spanning 617-689 (TIKMRPDRHG…DHVVQFIRSA (73 aa)) is the PDZ domain. The Tyrosine-protein phosphatase domain occupies 753-1011 (VVDHFEMLYR…TFVCESILRA (259 aa)). Substrate-binding positions include aspartate 920, 952 to 958 (CSAGIGR), and glutamine 996. Cysteine 952 functions as the Phosphocysteine intermediate in the catalytic mechanism.

It belongs to the protein-tyrosine phosphatase family. Non-receptor class subfamily.

It is found in the cytoplasm. Its subcellular location is the cytoskeleton. It carries out the reaction O-phospho-L-tyrosyl-[protein] + H2O = L-tyrosyl-[protein] + phosphate. This is Tyrosine-protein phosphatase 1 (ptp-1) from Caenorhabditis elegans.